A 458-amino-acid chain; its full sequence is tRNA modification GTPase MnmE (458 aa).

(6S)-5-formyl-5,6,7,8-tetrahydrofolate-binding residues include R22, E85, and R124. A TrmE-type G domain is found at G220–F379. N230 is a binding site for K(+). GTP contacts are provided by residues N230–S235, T249–T255, and D274–G277. Mg(2+) is bound at residue S234. K(+) contacts are provided by T249, I251, and T254. T255 provides a ligand contact to Mg(2+). (6S)-5-formyl-5,6,7,8-tetrahydrofolate is bound at residue K458.

It belongs to the TRAFAC class TrmE-Era-EngA-EngB-Septin-like GTPase superfamily. TrmE GTPase family. Homodimer. Heterotetramer of two MnmE and two MnmG subunits. Requires K(+) as cofactor.

It localises to the cytoplasm. Its function is as follows. Exhibits a very high intrinsic GTPase hydrolysis rate. Involved in the addition of a carboxymethylaminomethyl (cmnm) group at the wobble position (U34) of certain tRNAs, forming tRNA-cmnm(5)s(2)U34. In Shouchella clausii (strain KSM-K16) (Alkalihalobacillus clausii), this protein is tRNA modification GTPase MnmE.